Consider the following 406-residue polypeptide: Proteasome-activating nucleotidase 1 (406 aa).

Over residues 1–12 (MTDTVEDVELPY) the composition is skewed to acidic residues. The disordered stretch occupies residues 1 to 20 (MTDTVEDVELPYDDSASQQD). Residues 12-70 (YDDSASQQDKLEALEEQLSTLEEENEEMRDRLLDANAENNKYQQKLERLSHENKKLKQS) adopt a coiled-coil conformation. ATP is bound by residues 192–197 (GTGKTL) and His-331. The disordered stretch occupies residues 385-406 (AREKLDQDSEPAAATDVSRTFA). The interval 404 to 406 (TFA) is docks into pockets in the proteasome alpha-ring to cause gate opening.

Belongs to the AAA ATPase family. Homohexamer. The hexameric complex has a two-ring architecture resembling a top hat that caps the 20S proteasome core at one or both ends. Upon ATP-binding, the C-terminus of PAN interacts with the alpha-rings of the proteasome core by binding to the intersubunit pockets.

It is found in the cytoplasm. Functionally, ATPase which is responsible for recognizing, binding, unfolding and translocation of substrate proteins into the archaeal 20S proteasome core particle. Is essential for opening the gate of the 20S proteasome via an interaction with its C-terminus, thereby allowing substrate entry and access to the site of proteolysis. Thus, the C-termini of the proteasomal ATPase function like a 'key in a lock' to induce gate opening and therefore regulate proteolysis. Unfolding activity requires energy from ATP hydrolysis, whereas ATP binding alone promotes ATPase-20S proteasome association which triggers gate opening, and supports translocation of unfolded substrates. The chain is Proteasome-activating nucleotidase 1 from Halobacterium salinarum (strain ATCC 700922 / JCM 11081 / NRC-1) (Halobacterium halobium).